Consider the following 2269-residue polypeptide: Neuron navigator 3 (2269 aa).

The Calponin-homology (CH) domain occupies 55 to 162; the sequence is SKICKIYTDW…LFFILSRYKQ (108 aa). Residues 186–207 are compositionally biased toward polar residues; the sequence is TGAAQLSQHKTQDMQSSLTARY. Disordered stretches follow at residues 186 to 358 and 388 to 532; these read TGAA…RSML and SEFG…NKGS. A compositionally biased stretch (low complexity) spans 236-252; sequence GSGSNSSKGSSNLNRRS. 2 stretches are compositionally biased toward polar residues: residues 267 to 291 and 305 to 319; these read ASGNDRGSMNGSGSVPSSTSGQQLA and SKSMNMKHSATSSML. A compositionally biased stretch (pro residues) spans 323 to 333; sequence PPSPTSSPTPP. Polar residues predominate over residues 346–356; sequence ASKSAPGNQRS. Low complexity predominate over residues 411-432; the sequence is PSASAFAPPSKSNNCKNHNNKS. Residues 505–518 are compositionally biased toward polar residues; that stretch reads TATSKPAGTQSCVP. Residues 644–672 adopt a coiled-coil conformation; that stretch reads ETRRMRTVKNIADLRQNLEETMSSLRGTQ. Disordered regions lie at residues 692–737, 756–776, 836–1036, 1050–1079, 1097–1412, and 1461–1487; these read GRGL…STTV, ASGARGAEPGEKGGISEVGPE, VKEM…IPGP, SGSATLGKVPKSACIGKSTGISNGRKTSLD, VPLQ…GTTC, and GGSATSLEERPRGMSRSGSFRDSTDEV. 2 stretches are compositionally biased toward polar residues: residues 699 to 716 and 727 to 737; these read SSRSSPMSWRLGQGSSPR and PPRSSAGSTTV. The segment covering 847-860 has biased composition (low complexity); the sequence is DSSSVSSGLSDTLD. The span at 874–886 shows a compositional bias: polar residues; that stretch reads GISSRKSKAAQSN. Low complexity predominate over residues 919–932; sequence PSCKWKTSSPSSSC. Over residues 939-950 the composition is skewed to polar residues; the sequence is QKTGLPMSQTGS. Residues 977–989 show a composition bias toward basic and acidic residues; sequence GKTDDAKASEKGK. The segment covering 1110–1137 has biased composition (low complexity); it reads SSSGGSSVVSRSGHRSSSSSIDSNVSGK. Polar residues predominate over residues 1163–1172; that stretch reads GRSSPVTINQ. 2 stretches are compositionally biased toward low complexity: residues 1185 to 1202 and 1223 to 1234; these read GTGLPTSPKSSPTSTQSG and GSKASSKPSSPG. Positions 1266 to 1276 are enriched in gly residues; that stretch reads GSLGSMGGQSG. Low complexity predominate over residues 1292–1305; that stretch reads SPASSPASGLSLPS. Composition is skewed to polar residues over residues 1313-1339 and 1354-1363; these read NLSSSSAGSKDTLSCHSMTSLHTSSES and RTGSVKSTLS. The span at 1381-1391 shows a compositional bias: basic and acidic residues; sequence TSHEEGKEWLR. Polar residues predominate over residues 1392-1412; it reads SHSTGGLQDTGSPLSPPGTTC. Positions 1499 to 1586 form a coiled coil; sequence SSLYSAQIRK…TDAQTAIQVA (88 aa). Disordered stretches follow at residues 1602–1672, 1756–1792, and 2207–2269; these read QHSS…PSSP, NDRLKSSGNTTPAATPAKTARPPSETSSTSSSSSRQS, and GYSS…ESAL. Composition is skewed to low complexity over residues 1605–1623 and 1765–1792; these read SESMSSINSAASHSSLGSA and TTPAATPAKTARPPSETSSTSSSSSRQS. A coiled-coil region spans residues 1697 to 1765; that stretch reads CECTEAEAEI…NDRLKSSGNT (69 aa). Residues 2208 to 2224 show a composition bias toward polar residues; the sequence is YSSSKDGAASKQVSQSD.

It belongs to the Nav/unc-53 family. Interacts with F-actin.

The protein localises to the nucleus outer membrane. It localises to the golgi apparatus. The protein resides in the cell projection. It is found in the lamellipodium. Its subcellular location is the filopodium. Functionally, involved in liver and heart organogenesis during embryo development. Plays a role in the migration of hepatoblasts from the intestinal endoderm during liver organogenesis; possibly by modulating actin polymerization during hepatoblast outgrowth. May be involved in neuron regeneration. This is Neuron navigator 3 (nav3) from Danio rerio (Zebrafish).